The chain runs to 275 residues: Phosphate import ATP-binding protein PstB 1 (275 aa).

The 240-residue stretch at 22-261 (FNVEGVKVYY…SPTEQMFNSP (240 aa)) folds into the ABC transporter domain. 54–61 (GPSGCGKS) is a binding site for ATP.

This sequence belongs to the ABC transporter superfamily. Phosphate importer (TC 3.A.1.7) family. The complex is composed of two ATP-binding proteins (PstB), two transmembrane proteins (PstC and PstA) and a solute-binding protein (PstS).

Its subcellular location is the cell inner membrane. It carries out the reaction phosphate(out) + ATP + H2O = ADP + 2 phosphate(in) + H(+). Functionally, part of the ABC transporter complex PstSACB involved in phosphate import. Responsible for energy coupling to the transport system. This Trichormus variabilis (strain ATCC 29413 / PCC 7937) (Anabaena variabilis) protein is Phosphate import ATP-binding protein PstB 1.